The chain runs to 295 residues: Tyrosine recombinase XerC (295 aa).

Residues 1–84 (MTLEEQFLSY…SLKSFYRLLT (84 aa)) enclose the Core-binding (CB) domain. Positions 105-289 (KLPEFFYQDE…SMQHLTAEYR (185 aa)) constitute a Tyr recombinase domain. Catalysis depends on residues Arg-145, Lys-169, His-241, Arg-244, and His-267. Tyr-276 functions as the O-(3'-phospho-DNA)-tyrosine intermediate in the catalytic mechanism.

Belongs to the 'phage' integrase family. XerC subfamily. In terms of assembly, forms a cyclic heterotetrameric complex composed of two molecules of XerC and two molecules of XerD.

It is found in the cytoplasm. Site-specific tyrosine recombinase, which acts by catalyzing the cutting and rejoining of the recombining DNA molecules. The XerC-XerD complex is essential to convert dimers of the bacterial chromosome into monomers to permit their segregation at cell division. It also contributes to the segregational stability of plasmids. The protein is Tyrosine recombinase XerC of Lactobacillus leichmannii.